The following is a 188-amino-acid chain: Glutathione S-transferase 2 (188 aa).

The GST N-terminal domain maps to 2 to 79 (VHYKLMCFDV…FLARQYGYSG (78 aa)). Glutathione contacts are provided by residues K43, 49–51 (GQL), and 63–64 (QS). In terms of domain architecture, GST C-terminal spans 81 to 188 (TPTEEMQVDS…PHLNVFIRKL (108 aa)).

It belongs to the GST superfamily. Sigma family.

The enzyme catalyses RX + glutathione = an S-substituted glutathione + a halide anion + H(+). Functionally, conjugation of reduced glutathione to a wide number of exogenous and endogenous hydrophobic electrophiles. The sequence is that of Glutathione S-transferase 2 (gst-2) from Caenorhabditis elegans.